A 215-amino-acid chain; its full sequence is NADH-quinone oxidoreductase subunit C (215 aa).

This sequence belongs to the complex I 30 kDa subunit family. In terms of assembly, NDH-1 is composed of 14 different subunits. Subunits NuoB, C, D, E, F, and G constitute the peripheral sector of the complex.

It is found in the cell inner membrane. It carries out the reaction a quinone + NADH + 5 H(+)(in) = a quinol + NAD(+) + 4 H(+)(out). Functionally, NDH-1 shuttles electrons from NADH, via FMN and iron-sulfur (Fe-S) centers, to quinones in the respiratory chain. The immediate electron acceptor for the enzyme in this species is believed to be ubiquinone. Couples the redox reaction to proton translocation (for every two electrons transferred, four hydrogen ions are translocated across the cytoplasmic membrane), and thus conserves the redox energy in a proton gradient. In Francisella philomiragia subsp. philomiragia (strain ATCC 25017 / CCUG 19701 / FSC 153 / O#319-036), this protein is NADH-quinone oxidoreductase subunit C.